We begin with the raw amino-acid sequence, 648 residues long: Macrolide export ATP-binding/permease protein MacB (648 aa).

The ABC transporter domain occupies 5–243 (LELKDIRRSY…AGGTEPVVNT (239 aa)). Residue 41–48 (GASGSGKS) participates in ATP binding. A run of 4 helical transmembrane segments spans residues 273 to 293 (LLTM…VVVG), 523 to 543 (LFMT…VMNI), 576 to 596 (AVLV…LIAF), and 611 to 631 (PLAL…FGWL).

This sequence belongs to the ABC transporter superfamily. Macrolide exporter (TC 3.A.1.122) family. Homodimer. Part of the tripartite efflux system MacAB-TolC, which is composed of an inner membrane transporter, MacB, a periplasmic membrane fusion protein, MacA, and an outer membrane component, TolC. The complex forms a large protein conduit and can translocate molecules across both the inner and outer membranes. Interacts with MacA.

Its subcellular location is the cell inner membrane. Functionally, part of the tripartite efflux system MacAB-TolC. MacB is a non-canonical ABC transporter that contains transmembrane domains (TMD), which form a pore in the inner membrane, and an ATP-binding domain (NBD), which is responsible for energy generation. Confers resistance against macrolides. The protein is Macrolide export ATP-binding/permease protein MacB of Escherichia coli O157:H7.